The chain runs to 398 residues: Enolase (398 aa).

Glutamine 154 provides a ligand contact to (2R)-2-phosphoglycerate. The Proton donor role is filled by glutamate 196. 3 residues coordinate Mg(2+): aspartate 232, glutamate 273, and aspartate 300. Residues lysine 325, arginine 354, serine 355, and lysine 376 each contribute to the (2R)-2-phosphoglycerate site. The active-site Proton acceptor is lysine 325.

It belongs to the enolase family. The cofactor is Mg(2+).

The protein localises to the cytoplasm. Its subcellular location is the secreted. It localises to the cell surface. It carries out the reaction (2R)-2-phosphoglycerate = phosphoenolpyruvate + H2O. It participates in carbohydrate degradation; glycolysis; pyruvate from D-glyceraldehyde 3-phosphate: step 4/5. Catalyzes the reversible conversion of 2-phosphoglycerate (2-PG) into phosphoenolpyruvate (PEP). It is essential for the degradation of carbohydrates via glycolysis. The protein is Enolase of Halobacterium salinarum (strain ATCC 700922 / JCM 11081 / NRC-1) (Halobacterium halobium).